The primary structure comprises 97 residues: uncharacterized protein (97 aa).

This is an uncharacterized protein from Escherichia coli O157:H7.